We begin with the raw amino-acid sequence, 156 residues long: Large ribosomal subunit protein uL15 (156 aa).

A compositionally biased stretch (basic and acidic residues) spans 1-11 (MKLNDLRDKPG). The disordered stretch occupies residues 1–44 (MKLNDLRDKPGSVKARKRVGRGIGSGTGKTGGRGVKGQKSRSGV). A compositionally biased stretch (gly residues) spans 21–35 (RGIGSGTGKTGGRGV).

The protein belongs to the universal ribosomal protein uL15 family. Part of the 50S ribosomal subunit.

In terms of biological role, binds to the 23S rRNA. The polypeptide is Large ribosomal subunit protein uL15 (Brucella abortus (strain S19)).